The chain runs to 430 residues: Lipoyl synthase, mitochondrial (430 aa).

Residues 1–37 (MAASTGKLRTLFSAHSSLSARPSSALPALRLTILRSY) constitute a mitochondrion transit peptide. The span at 40 to 56 (TTPPDSSISNPSNPSTT) shows a compositional bias: low complexity. Positions 40 to 64 (TTPPDSSISNPSNPSTTVKRPPTAF) are disordered. Positions 141, 146, 152, 172, 176, 179, and 387 each coordinate [4Fe-4S] cluster. The Radical SAM core domain maps to 155–376 (GSSKSAATAT…KERALEMGFL (222 aa)).

Belongs to the radical SAM superfamily. Lipoyl synthase family. [4Fe-4S] cluster is required as a cofactor.

It is found in the mitochondrion. It carries out the reaction [[Fe-S] cluster scaffold protein carrying a second [4Fe-4S](2+) cluster] + N(6)-octanoyl-L-lysyl-[protein] + 2 oxidized [2Fe-2S]-[ferredoxin] + 2 S-adenosyl-L-methionine + 4 H(+) = [[Fe-S] cluster scaffold protein] + N(6)-[(R)-dihydrolipoyl]-L-lysyl-[protein] + 4 Fe(3+) + 2 hydrogen sulfide + 2 5'-deoxyadenosine + 2 L-methionine + 2 reduced [2Fe-2S]-[ferredoxin]. Its pathway is protein modification; protein lipoylation via endogenous pathway; protein N(6)-(lipoyl)lysine from octanoyl-[acyl-carrier-protein]: step 2/2. In terms of biological role, catalyzes the radical-mediated insertion of two sulfur atoms into the C-6 and C-8 positions of the octanoyl moiety bound to the lipoyl domains of lipoate-dependent enzymes, thereby converting the octanoylated domains into lipoylated derivatives. The polypeptide is Lipoyl synthase, mitochondrial (Blastomyces gilchristii (strain SLH14081) (Blastomyces dermatitidis)).